The chain runs to 763 residues: 5-methyltetrahydropteroyltriglutamate--homocysteine methyltransferase (763 aa).

5-methyltetrahydropteroyltri-L-glutamate contacts are provided by residues 16–19 and Lys-121; that span reads RELK. L-homocysteine-binding positions include 440–442 and Glu-493; that span reads IGS. Residues 440–442 and Glu-493 contribute to the L-methionine site; that span reads IGS. Residues 524–525 and Trp-570 each bind 5-methyltetrahydropteroyltri-L-glutamate; that span reads RC. Residue Asp-608 coordinates L-homocysteine. Position 608 (Asp-608) interacts with L-methionine. Glu-614 is a 5-methyltetrahydropteroyltri-L-glutamate binding site. Zn(2+) is bound by residues His-650, Cys-652, and Glu-674. His-703 acts as the Proton donor in catalysis. Zn(2+) is bound at residue Cys-735.

The protein belongs to the vitamin-B12 independent methionine synthase family. Requires Zn(2+) as cofactor.

It carries out the reaction 5-methyltetrahydropteroyltri-L-glutamate + L-homocysteine = tetrahydropteroyltri-L-glutamate + L-methionine. Its pathway is amino-acid biosynthesis; L-methionine biosynthesis via de novo pathway; L-methionine from L-homocysteine (MetE route): step 1/1. In terms of biological role, catalyzes the transfer of a methyl group from 5-methyltetrahydrofolate to homocysteine resulting in methionine formation. This is 5-methyltetrahydropteroyltriglutamate--homocysteine methyltransferase from Paraburkholderia phymatum (strain DSM 17167 / CIP 108236 / LMG 21445 / STM815) (Burkholderia phymatum).